The following is a 294-amino-acid chain: Glutamyl-Q tRNA(Asp) synthetase (294 aa).

L-glutamate-binding positions include 7 to 11 and Glu43; that span reads RFAPS. A 'HIGH' region motif is present at residues 10 to 20; sequence PSPSGPLHFGS. Zn(2+) is bound by residues Cys99, Cys101, Tyr113, and Cys117. L-glutamate is bound by residues Tyr168 and Arg186. The short motif at 224–228 is the 'KMSKS' region element; the sequence is KLSKQ. Residue Lys227 participates in ATP binding.

Belongs to the class-I aminoacyl-tRNA synthetase family. GluQ subfamily. Zn(2+) serves as cofactor.

Catalyzes the tRNA-independent activation of glutamate in presence of ATP and the subsequent transfer of glutamate onto a tRNA(Asp). Glutamate is transferred on the 2-amino-5-(4,5-dihydroxy-2-cyclopenten-1-yl) moiety of the queuosine in the wobble position of the QUC anticodon. This Vibrio parahaemolyticus serotype O3:K6 (strain RIMD 2210633) protein is Glutamyl-Q tRNA(Asp) synthetase.